A 272-amino-acid polypeptide reads, in one-letter code: 4-hydroxy-tetrahydrodipicolinate reductase (272 aa).

NAD(+)-binding positions include 10–15 (GAGGRM), E36, 100–102 (GTT), and 124–127 (SGNM). Residue H157 is the Proton donor/acceptor of the active site. H158 provides a ligand contact to (S)-2,3,4,5-tetrahydrodipicolinate. K161 acts as the Proton donor in catalysis. Residue 167-168 (GT) participates in (S)-2,3,4,5-tetrahydrodipicolinate binding.

It belongs to the DapB family.

The protein resides in the cytoplasm. It carries out the reaction (S)-2,3,4,5-tetrahydrodipicolinate + NAD(+) + H2O = (2S,4S)-4-hydroxy-2,3,4,5-tetrahydrodipicolinate + NADH + H(+). The catalysed reaction is (S)-2,3,4,5-tetrahydrodipicolinate + NADP(+) + H2O = (2S,4S)-4-hydroxy-2,3,4,5-tetrahydrodipicolinate + NADPH + H(+). Its pathway is amino-acid biosynthesis; L-lysine biosynthesis via DAP pathway; (S)-tetrahydrodipicolinate from L-aspartate: step 4/4. Catalyzes the conversion of 4-hydroxy-tetrahydrodipicolinate (HTPA) to tetrahydrodipicolinate. The protein is 4-hydroxy-tetrahydrodipicolinate reductase of Bradyrhizobium sp. (strain ORS 278).